The primary structure comprises 149 residues: Myosin, essential light chain (149 aa).

EF-hand domains are found at residues 7-42 (SMID…FGLN) and 79-114 (GSYE…LGEK).

As to quaternary structure, myosin is a hexamer of 2 heavy chains and 4 light chains (two regulatory light chains and two essential light chains).

The protein is Myosin, essential light chain of Branchiostoma floridae (Florida lancelet).